Here is a 514-residue protein sequence, read N- to C-terminus: MAKFLAELLGCTLPEKGASPMFECRSQPHIGLRHVTKQRDKMPQTPPFPVMYGSTNGYNKNLYKAKEEDYEGLYYHDNNLISGSLEALIEHLVPTVAYYPDRTYIFTFLLSSRLFLHPYELMSKVCHLCVDQQRLSDPQADKARVRKIAPKILQLLTEWTETFPYDFRDERMMKSLKELTHRLSTGEDLYRKAVQQMTQTLIRKLTTLSQYEEALAKINSSVTDRLTVLKTKPQSIQRDILTICNDPFTLAQQLTHIELERLSYIGPEEFVQAFVQKDPLDNDKNCFSDHKKASNLEAYVEWFNRLSYLVATEICMPVKKKHRARVIEFFIDVARECFNIGNFNSLMAIITGMNMSPVSRLKKTWAKVKTAKFDILEHQMDPSSNFYNYRTALRGATQRSITAHSSREKIVIPFFSLLIKDIYFLNEGCANRLPNGHVNFEKFWELAKQVTEFMTWKKVECPFDRDRKILQYLLTAPVFSEDALYLASYESEGPENNMEKDRWKSLRSSLLNRT.

The 131-residue stretch at H76 to T206 folds into the N-terminal Ras-GEF domain. Positions D246–P494 constitute a Ras-GEF domain.

As to expression, detected in oocytes, and in embryos at 4 to 120 hours post-fertilization (hpf). Detected along marginal blastomeres at early epiboly stage and throughout the margin at the onset of gastrulation. At 60% epiboly, strongest expression is found in the dorsal shield region and is restricted to the epiblast. Detected in the anterior border of the presomitic mesoderm at the end of epiboly. Detected in adaxial cells, in the somites and in the nervous system during somitogenesis. Detected in diencephalon and hindbrain and in cells surrounding the notochord, including adaxial cells and ventral mesendoderm, in 15-somite stage embryos. At 48 hpf, detected mainly in the brain.

Its function is as follows. Guanine nucleotide exchange factor (GEF) for Ras family proteins (in vitro). This is Ras-GEF domain-containing family member 1B-A (rasgef1ba) from Danio rerio (Zebrafish).